Here is a 506-residue protein sequence, read N- to C-terminus: Phenylacetaldehyde synthase (506 aa).

L-phenylalanine is bound by residues P101, H202, and H317. Position 318 is an N6-(pyridoxal phosphate)lysine (K318).

It belongs to the group II decarboxylase family. In terms of assembly, homotetramer. Requires pyridoxal 5'-phosphate as cofactor. In terms of tissue distribution, highly expressed in corolla limbs and at lower levels in corolla tubes and ovaries.

It catalyses the reaction L-phenylalanine + O2 + H2O + H(+) = 2-phenylacetaldehyde + H2O2 + NH4(+) + CO2. Functionally, bifunctional enzyme that catalyzes the decarboxylation of L-phenylalanine to 2-phenylethylamine, which is then oxidized to form 2-phenylacetaldehyde, a constituent of floral scent. 2-phenylacetaldehyde is a precursor of 2-phenylethanol, another constituent of floral scent. In Petunia hybrida (Petunia), this protein is Phenylacetaldehyde synthase.